The primary structure comprises 320 residues: Putative S-adenosyl-L-methionine-dependent methyltransferase MAP_4078 (320 aa).

S-adenosyl-L-methionine is bound by residues aspartate 132 and 161-162 (DL). Residues 294-320 (PPHDIEDAIPQTRFVAAQRTERTRPDR) are disordered.

Belongs to the UPF0677 family.

Functionally, exhibits S-adenosyl-L-methionine-dependent methyltransferase activity. The sequence is that of Putative S-adenosyl-L-methionine-dependent methyltransferase MAP_4078 from Mycolicibacterium paratuberculosis (strain ATCC BAA-968 / K-10) (Mycobacterium paratuberculosis).